The following is a 392-amino-acid chain: Putative cystathionine gamma-lyase 2 (392 aa).

Residues 32–55 (LSSTYKQDNPGEPKGHDYSRAGNP) form a disordered region. Basic and acidic residues predominate over residues 40 to 50 (NPGEPKGHDYS). Substrate contacts are provided by arginine 51, tyrosine 103, and arginine 108. Lysine 203 bears the N6-(pyridoxal phosphate)lysine mark. Glutamate 330 contacts substrate.

The protein belongs to the trans-sulfuration enzymes family. It depends on pyridoxal 5'-phosphate as a cofactor.

The protein resides in the cytoplasm. It catalyses the reaction L,L-cystathionine + H2O = 2-oxobutanoate + L-cysteine + NH4(+). The protein operates within amino-acid biosynthesis; L-cysteine biosynthesis; L-cysteine from L-homocysteine and L-serine: step 2/2. In Caenorhabditis elegans, this protein is Putative cystathionine gamma-lyase 2 (cth-2).